The chain runs to 567 residues: Urease subunit alpha (567 aa).

In terms of domain architecture, Urease spans 130 to 567 (GGIDTHIHFI…LPLAQRYFLF (438 aa)). Residues His135, His137, and Lys218 each coordinate Ni(2+). An N6-carboxylysine modification is found at Lys218. Residue His220 participates in substrate binding. Ni(2+) contacts are provided by His247 and His273. His321 (proton donor) is an active-site residue. Asp361 provides a ligand contact to Ni(2+).

This sequence belongs to the metallo-dependent hydrolases superfamily. Urease alpha subunit family. In terms of assembly, heterotrimer of UreA (gamma), UreB (beta) and UreC (alpha) subunits. Three heterotrimers associate to form the active enzyme. Ni cation is required as a cofactor. Post-translationally, carboxylation allows a single lysine to coordinate two nickel ions.

It localises to the cytoplasm. The catalysed reaction is urea + 2 H2O + H(+) = hydrogencarbonate + 2 NH4(+). Its pathway is nitrogen metabolism; urea degradation; CO(2) and NH(3) from urea (urease route): step 1/1. The polypeptide is Urease subunit alpha (Methylobacillus flagellatus (strain ATCC 51484 / DSM 6875 / VKM B-1610 / KT)).